The chain runs to 495 residues: UDP-N-acetylmuramoyl-L-alanyl-D-glutamate--2,6-diaminopimelate ligase (495 aa).

UDP-N-acetyl-alpha-D-muramoyl-L-alanyl-D-glutamate-binding positions include Leu-27, Ser-29, and 44 to 46; that span reads HQA. 116–122 provides a ligand contact to ATP; the sequence is GTNGKTT. Residues Asn-157, 158-159, Ser-185, Gln-191, and Arg-193 contribute to the UDP-N-acetyl-alpha-D-muramoyl-L-alanyl-D-glutamate site; that span reads TT. Lys-225 bears the N6-carboxylysine mark. Meso-2,6-diaminopimelate-binding positions include Arg-390, 414 to 417, Gly-465, and Glu-469; that span reads DNPR. Positions 414-417 match the Meso-diaminopimelate recognition motif motif; the sequence is DNPR.

This sequence belongs to the MurCDEF family. MurE subfamily. It depends on Mg(2+) as a cofactor. Carboxylation is probably crucial for Mg(2+) binding and, consequently, for the gamma-phosphate positioning of ATP.

It localises to the cytoplasm. The enzyme catalyses UDP-N-acetyl-alpha-D-muramoyl-L-alanyl-D-glutamate + meso-2,6-diaminopimelate + ATP = UDP-N-acetyl-alpha-D-muramoyl-L-alanyl-gamma-D-glutamyl-meso-2,6-diaminopimelate + ADP + phosphate + H(+). Its pathway is cell wall biogenesis; peptidoglycan biosynthesis. In terms of biological role, catalyzes the addition of meso-diaminopimelic acid to the nucleotide precursor UDP-N-acetylmuramoyl-L-alanyl-D-glutamate (UMAG) in the biosynthesis of bacterial cell-wall peptidoglycan. The protein is UDP-N-acetylmuramoyl-L-alanyl-D-glutamate--2,6-diaminopimelate ligase of Escherichia coli O6:H1 (strain CFT073 / ATCC 700928 / UPEC).